We begin with the raw amino-acid sequence, 116 residues long: Phycoerythrin alpha-3 subunit (116 aa).

5 residues coordinate (2R,3E)-phycoerythrobilin: Ser53, Glu63, Arg64, Cys67, and Lys85.

It belongs to the phycoerythrin family. Heterotetramer of 2 different alpha chains and 2 identical beta chains which form 2 alpha-beta heterodimers within the heterotetramer. The two alpha-beta heterodimers are rotated to an open configuration in contrast to the closed configuration found in other cryptophyte species due to the insertion of a single amino acid, Asp-65, in a conserved region of the alpha chain. In the open form, the central chromophores are not in physical contact but are separated by a water-filled channel. Contains three phycoerythrobilin chromophores with binding mediated by both the alpha and beta subunits.

The protein localises to the plastid. It localises to the chloroplast thylakoid membrane. In terms of biological role, light-harvesting photosynthetic tetrapyrrole chromophore-protein from the phycobiliprotein complex. This is Phycoerythrin alpha-3 subunit from Hemiselmis andersenii (Cryptophyte alga).